Reading from the N-terminus, the 329-residue chain is DNA-directed RNA polymerase subunit alpha (329 aa).

The segment at 1 to 235 (MQGSVTEFLK…EQLDAFVDLR (235 aa)) is alpha N-terminal domain (alpha-NTD). The alpha C-terminal domain (alpha-CTD) stretch occupies residues 249 to 329 (FDPILLRPVD…NWPPASIAED (81 aa)).

Belongs to the RNA polymerase alpha chain family. As to quaternary structure, homodimer. The RNAP catalytic core consists of 2 alpha, 1 beta, 1 beta' and 1 omega subunit. When a sigma factor is associated with the core the holoenzyme is formed, which can initiate transcription.

The catalysed reaction is RNA(n) + a ribonucleoside 5'-triphosphate = RNA(n+1) + diphosphate. Functionally, DNA-dependent RNA polymerase catalyzes the transcription of DNA into RNA using the four ribonucleoside triphosphates as substrates. This Aliivibrio fischeri (strain ATCC 700601 / ES114) (Vibrio fischeri) protein is DNA-directed RNA polymerase subunit alpha.